A 167-amino-acid polypeptide reads, in one-letter code: NAD(P)H-quinone oxidoreductase subunit J (167 aa).

It belongs to the complex I 30 kDa subunit family. In terms of assembly, NDH-1 can be composed of about 15 different subunits; different subcomplexes with different compositions have been identified which probably have different functions.

It is found in the cellular thylakoid membrane. It catalyses the reaction a plastoquinone + NADH + (n+1) H(+)(in) = a plastoquinol + NAD(+) + n H(+)(out). The enzyme catalyses a plastoquinone + NADPH + (n+1) H(+)(in) = a plastoquinol + NADP(+) + n H(+)(out). NDH-1 shuttles electrons from an unknown electron donor, via FMN and iron-sulfur (Fe-S) centers, to quinones in the respiratory and/or the photosynthetic chain. The immediate electron acceptor for the enzyme in this species is believed to be plastoquinone. Couples the redox reaction to proton translocation, and thus conserves the redox energy in a proton gradient. Cyanobacterial NDH-1 also plays a role in inorganic carbon-concentration. In Trichodesmium erythraeum (strain IMS101), this protein is NAD(P)H-quinone oxidoreductase subunit J.